We begin with the raw amino-acid sequence, 370 residues long: MHRLIFVCTLVCANFCSCRDTSATPQSASIKALRNANLRRDESNHLTDLYRRDETIQVRGNGYVQSPRFPNSYPRNLLLTWRLHSQENTRIQLVFDNQFGLEEAENDICRYDFVEVEDISETSTIIRGRWCGHKEVPPRIKSRTNQIKITFKSDDYFVAKPGFKIYYSLLEDFQPAAASETNWESVTSSISGVSYNSPSVTDPTLIADALDKKIAEFDTVEDLLKYFNPESWQEDLENMYLDTPRYRGRSYHDRKSKVDLDRLNDDAKRYSCTPRNYSVNIREELKLANVVFFPRCLLVQRCGGNCGCGTVNWRSCTCNSGKTVKKYHEVLQFEPGHIKRRGRAKTMALVDIQLDHHERCDCICSSRPPR.

Residues 1–18 form the signal peptide; sequence MHRLIFVCTLVCANFCSC. Positions 52 to 170 constitute a CUB domain; sequence RDETIQVRGN…PGFKIYYSLL (119 aa). The cysteines at positions 109 and 131 are disulfide-linked. Asn-276 carries N-linked (GlcNAc...) asparagine glycosylation. 2 disulfide bridges follow: Cys-302/Cys-360 and Cys-306/Cys-362.

Belongs to the PDGF/VEGF growth factor family. In terms of assembly, homodimer; disulfide-linked. Interacts with PDGFRB homodimers, and with heterodimers formed by PDGFRA and PDGFRB. Post-translationally, activated by proteolytic cleavage. Proteolytic removal of the N-terminal CUB domain releasing the core domain is necessary for unmasking the receptor-binding epitopes of the core domain. Cleavage after Arg-247 or Arg-249 by urokinase plasminogen activator gives rise to the active form.

It is found in the secreted. In terms of biological role, growth factor that plays an essential role in the regulation of embryonic development, cell proliferation, cell migration, survival and chemotaxis. Potent mitogen for cells of mesenchymal origin. Plays an important role in wound healing. Induces macrophage recruitment, increased interstitial pressure, and blood vessel maturation during angiogenesis. Can initiate events that lead to a mesangial proliferative glomerulonephritis, including influx of monocytes and macrophages and production of extracellular matrix. The chain is Platelet-derived growth factor D (PDGFD) from Pongo abelii (Sumatran orangutan).